A 41-amino-acid polypeptide reads, in one-letter code: Large ribosomal subunit protein bL32c (41 aa).

Belongs to the bacterial ribosomal protein bL32 family.

It is found in the plastid. The sequence is that of Large ribosomal subunit protein bL32c (rpl32) from Helicosporidium sp. subsp. Simulium jonesii (Green alga).